Consider the following 37-residue polypeptide: Cytochrome b6-f complex subunit 5 (37 aa).

The chain crosses the membrane as a helical span at residues 5–25; that stretch reads LLSGIVLGMITVSALGLFVAA.

It belongs to the PetG family. In terms of assembly, the 4 large subunits of the cytochrome b6-f complex are cytochrome b6, subunit IV (17 kDa polypeptide, PetD), cytochrome f and the Rieske protein, while the 4 small subunits are PetG, PetL, PetM and PetN. The complex functions as a dimer.

The protein resides in the plastid. It is found in the chloroplast thylakoid membrane. Functionally, component of the cytochrome b6-f complex, which mediates electron transfer between photosystem II (PSII) and photosystem I (PSI), cyclic electron flow around PSI, and state transitions. PetG is required for either the stability or assembly of the cytochrome b6-f complex. The chain is Cytochrome b6-f complex subunit 5 from Trieres chinensis (Marine centric diatom).